The following is a 97-amino-acid chain: SAGA-associated factor 11 (97 aa).

An SGF11-type zinc finger spans residues 70 to 91; sequence IECNVCGREVSGNRFAAHLVRC.

The protein belongs to the SGF11 family. As to quaternary structure, component of the 1.8 MDa SAGA transcription coactivator-HAT complex. SAGA is built of 5 distinct domains with specialized functions. Within the SAGA complex, SUS1, SGF11, SGF73 and UBP8 form an additional subcomplex of SAGA called the DUB module (deubiquitination module). Interacts directly with SGF73, SUS1 and UBP8.

The protein localises to the nucleus. Its function is as follows. Functions as a component of the transcription regulatory histone acetylation (HAT) complex SAGA. At the promoters, SAGA is required for recruitment of the basal transcription machinery. It influences RNA polymerase II transcriptional activity through different activities such as TBP interaction and promoter selectivity, interaction with transcription activators, and chromatin modification through histone acetylation and deubiquitination. SAGA acetylates nucleosomal histone H3 to some extent (to form H3K9ac, H3K14ac, H3K18ac and H3K23ac). SAGA interacts with DNA via upstream activating sequences (UASs). Involved in transcriptional regulation of a subset of SAGA-regulated genes. Within the SAGA complex, participates in a subcomplex, that specifically deubiquitinates histones H2B. The protein is SAGA-associated factor 11 of Kluyveromyces lactis (strain ATCC 8585 / CBS 2359 / DSM 70799 / NBRC 1267 / NRRL Y-1140 / WM37) (Yeast).